Consider the following 231-residue polypeptide: Two-component response regulator ARR3 (231 aa).

Positions 34 to 161 constitute a Response regulatory domain; it reads HVLAVDDSLV…DVKRLRSYLT (128 aa). Residue D94 is modified to 4-aspartylphosphate. The segment at 170 to 231 is disordered; it reads GNKRKLTTPP…DSPMRSPGLA (62 aa). Residues 185-199 show a composition bias toward low complexity; it reads SATSSMESSDSTVES. The segment covering 210–221 has biased composition (polar residues); sequence LTMSPESATSLV.

Belongs to the ARR family. Type-A subfamily. In terms of processing, two-component system major event consists of a His-to-Asp phosphorelay between a sensor histidine kinase (HK) and a response regulator (RR). In plants, the His-to-Asp phosphorelay involves an additional intermediate named Histidine-containing phosphotransfer protein (HPt). This multistep phosphorelay consists of a His-Asp-His-Asp sequential transfer of a phosphate group between first a His and an Asp of the HK protein, followed by the transfer to a conserved His of the HPt protein and finally the transfer to an Asp in the receiver domain of the RR protein. Predominantly expressed in roots.

It localises to the nucleus. In terms of biological role, functions as a response regulator involved in His-to-Asp phosphorelay signal transduction system. Phosphorylation of the Asp residue in the receiver domain activates the ability of the protein to promote the transcription of target genes. Type-A response regulators seem to act as negative regulators of the cytokinin signaling. This Arabidopsis thaliana (Mouse-ear cress) protein is Two-component response regulator ARR3 (ARR3).